We begin with the raw amino-acid sequence, 447 residues long: ATP-dependent protease ATPase subunit HslU (447 aa).

ATP-binding positions include isoleucine 18, 60–65 (GVGKTE), aspartate 260, glutamate 325, and arginine 397.

This sequence belongs to the ClpX chaperone family. HslU subfamily. As to quaternary structure, a double ring-shaped homohexamer of HslV is capped on each side by a ring-shaped HslU homohexamer. The assembly of the HslU/HslV complex is dependent on binding of ATP.

It localises to the cytoplasm. ATPase subunit of a proteasome-like degradation complex; this subunit has chaperone activity. The binding of ATP and its subsequent hydrolysis by HslU are essential for unfolding of protein substrates subsequently hydrolyzed by HslV. HslU recognizes the N-terminal part of its protein substrates and unfolds these before they are guided to HslV for hydrolysis. The protein is ATP-dependent protease ATPase subunit HslU of Paraburkholderia phymatum (strain DSM 17167 / CIP 108236 / LMG 21445 / STM815) (Burkholderia phymatum).